A 108-amino-acid chain; its full sequence is UPF0060 membrane protein Nwi_1459 (108 aa).

Transmembrane regions (helical) follow at residues 5-25, 31-51, 61-81, and 88-108; these read AAYV…WAWL, VWWL…LTLV, AAYG…VEGI, and LAGA…PHEI.

This sequence belongs to the UPF0060 family.

It localises to the cell inner membrane. This Nitrobacter winogradskyi (strain ATCC 25391 / DSM 10237 / CIP 104748 / NCIMB 11846 / Nb-255) protein is UPF0060 membrane protein Nwi_1459.